Reading from the N-terminus, the 509-residue chain is Maturase K (509 aa).

Belongs to the intron maturase 2 family. MatK subfamily.

The protein localises to the plastid. It is found in the chloroplast. Usually encoded in the trnK tRNA gene intron. Probably assists in splicing its own and other chloroplast group II introns. The protein is Maturase K of Hottonia palustris (Water-violet).